The primary structure comprises 319 residues: Bidirectional sugar transporter SWEET15 (319 aa).

Residues 1–10 are Extracellular-facing; sequence MAFMSMERST. A helical transmembrane segment spans residues 11-31; the sequence is WAFTFGILGNLISLMVFLSPL. One can recognise a MtN3/slv 1 domain in the interval 13–99; the sequence is FTFGILGNLI…AMYLAYAPKS (87 aa). Topologically, residues 32–50 are cytoplasmic; sequence PTFYRVYRKKSTEGFQSTP. The chain crosses the membrane as a helical span at residues 51 to 71; that stretch reads YVVTLFSCMLWMYYAFVKSGA. Position 72 (glutamate 72) is a topological domain, extracellular. The chain crosses the membrane as a helical span at residues 73–93; that stretch reads LLVTINGVGCVIETVYLAMYL. Residues 94–106 are Cytoplasmic-facing; that stretch reads AYAPKSARMLTAK. The helical transmembrane segment at 107–127 threads the bilayer; that stretch reads MLLGLNIGLFGVIALVTLLLS. The Extracellular segment spans residues 128 to 134; sequence RGELRVH. Residues 135–155 form a helical membrane-spanning segment; that stretch reads VLGWICVAVSLSVFAAPLSII. Positions 135–219 constitute a MtN3/slv 2 domain; it reads VLGWICVAVS…ALYMAYRSKK (85 aa). Topologically, residues 156-167 are cytoplasmic; it reads RLVIRTKSVEFM. A helical membrane pass occupies residues 168 to 188; it reads PFSLSFFLVLSAVIWFLYGLL. Residues 189 to 191 are Extracellular-facing; the sequence is KKD. Residues 192–212 traverse the membrane as a helical segment; it reads VFVALPNVLGFVFGVAQMALY. Residues 213-319 lie on the Cytoplasmic side of the membrane; that stretch reads MAYRSKKPLV…KPDMAIVVEV (107 aa).

This sequence belongs to the SWEET sugar transporter family. As to quaternary structure, forms homooligomers and/or heterooligomers.

The protein localises to the cell membrane. Its function is as follows. Mediates both low-affinity uptake and efflux of sugar across the plasma membrane. In Oryza sativa subsp. indica (Rice), this protein is Bidirectional sugar transporter SWEET15 (SWEET15).